We begin with the raw amino-acid sequence, 383 residues long: MCPSFHTTASVTTASNQADSDFNLAKLITAPAQLLAHNTMRLSCQAMQLITLEQEAQVEPAIAKLKEGDAPLFVLSGGSNVILPKQLQAQVLHPVFKGIEVLAEDEHSVSLEVMGGENWHELVLYTVNNGWYGLENLALIPGLVGASPVQNIGAYGVQLEDCLTHIKAFHLPTQKWHDFDKADCQFNYRDSLFKQQAGQWLITRVGFKLHKDATQVNADYGDVACLALSLAQADNRSAIGPIDVMHAIIDIRQSKLPDPAVLPNCGSFFKNPIIGTEQFAQLQHEYPGIVGYRVDEAHTKVAAGWLIDTAGLKGQGINPILTHAKQALVLVNHSALDSTTPASQADILATQQFIQRSIKDKFGIELEREPVWVDEQASYTAAP.

In terms of domain architecture, FAD-binding PCMH-type spans 42–212; sequence LSCQAMQLIT…TRVGFKLHKD (171 aa). Residue arginine 189 is part of the active site. The active-site Proton donor is serine 267. Residue glutamate 369 is part of the active site.

Belongs to the MurB family. The cofactor is FAD.

Its subcellular location is the cytoplasm. It carries out the reaction UDP-N-acetyl-alpha-D-muramate + NADP(+) = UDP-N-acetyl-3-O-(1-carboxyvinyl)-alpha-D-glucosamine + NADPH + H(+). Its pathway is cell wall biogenesis; peptidoglycan biosynthesis. Cell wall formation. The polypeptide is UDP-N-acetylenolpyruvoylglucosamine reductase (Psychrobacter sp. (strain PRwf-1)).